The sequence spans 589 residues: Glucose starvation modulator protein 1 (589 aa).

A DNA-binding region (zn(2)-C6 fungal-type) is located at residues 20–48 (CVFCHQKHLQCSNERPCKNCVKRNIGHEC). 3 disordered regions span residues 59–90 (LTGNGKGSSSKTKTPRKKLKSTPITASSPSVA), 218–240 (NNSNNTSHNDNFIAQNNNNNPEP), and 340–362 (ANGQTEDLLDHNKDDSRKNPGNG). A compositionally biased stretch (polar residues) spans 80 to 90 (TPITASSPSVA). Residues 347–357 (LLDHNKDDSRK) show a composition bias toward basic and acidic residues. The 72-residue stretch at 471-542 (SLLDYKKLVE…FKFFKNIAVN (72 aa)) folds into the PAS domain.

This sequence belongs to the ERT1/acuK family.

It localises to the nucleus. In terms of biological role, transcription factor which regulates nonfermentable carbon utilization. The protein is Glucose starvation modulator protein 1 (GSM1) of Candida tropicalis (strain ATCC MYA-3404 / T1) (Yeast).